We begin with the raw amino-acid sequence, 308 residues long: Cytochrome b (308 aa).

4 consecutive transmembrane segments (helical) span residues 1-21, 45-66, 81-101, and 146-166; these read FGSL…LMAM, WLIR…YLHI, WNTG…GYVL, and FFAL…VHLT. Heme b contacts are provided by H51 and H65. Heme b-binding residues include H150 and H164. Residue H169 coordinates a ubiquinone. 3 consecutive transmembrane segments (helical) span residues 194–214, 256–276, and 288–308; these read IKDI…AMFS, LGGV…PFLH, and LSQL…WVGS.

It belongs to the cytochrome b family. As to quaternary structure, the cytochrome bc1 complex contains 11 subunits: 3 respiratory subunits (MT-CYB, CYC1 and UQCRFS1), 2 core proteins (UQCRC1 and UQCRC2) and 6 low-molecular weight proteins (UQCRH/QCR6, UQCRB/QCR7, UQCRQ/QCR8, UQCR10/QCR9, UQCR11/QCR10 and a cleavage product of UQCRFS1). This cytochrome bc1 complex then forms a dimer. The cofactor is heme b.

The protein resides in the mitochondrion inner membrane. Component of the ubiquinol-cytochrome c reductase complex (complex III or cytochrome b-c1 complex) that is part of the mitochondrial respiratory chain. The b-c1 complex mediates electron transfer from ubiquinol to cytochrome c. Contributes to the generation of a proton gradient across the mitochondrial membrane that is then used for ATP synthesis. The sequence is that of Cytochrome b (MT-CYB) from Scytalopus magellanicus (Magellanic tapaculo).